Consider the following 212-residue polypeptide: Proteasome subunit beta type-2 (212 aa).

The protein belongs to the peptidase T1B family. The 26S proteasome consists of a 20S proteasome core and two 19S regulatory subunits. The 20S proteasome core is composed of 28 subunits that are arranged in four stacked rings, resulting in a barrel-shaped structure. The two end rings are each formed by seven alpha subunits, and the two central rings are each formed by seven beta subunits. The catalytic chamber with the active sites is on the inside of the barrel.

The protein localises to the cytoplasm. The protein resides in the nucleus. Functionally, non-catalytic component of the proteasome, a multicatalytic proteinase complex which is characterized by its ability to cleave peptides with Arg, Phe, Tyr, Leu, and Glu adjacent to the leaving group at neutral or slightly basic pH. The proteasome has an ATP-dependent proteolytic activity. The chain is Proteasome subunit beta type-2 (PBD1) from Oryza sativa subsp. japonica (Rice).